Consider the following 2264-residue polypeptide: Protein Ycf2 (2264 aa).

1611 to 1618 lines the ATP pocket; that stretch reads GSIGTGRS.

Belongs to the Ycf2 family.

It is found in the plastid. The protein resides in the chloroplast stroma. Its function is as follows. Probable ATPase of unknown function. Its presence in a non-photosynthetic plant (Epifagus virginiana) and experiments in tobacco indicate that it has an essential function which is probably not related to photosynthesis. The sequence is that of Protein Ycf2 from Lactuca sativa (Garden lettuce).